The primary structure comprises 375 residues: Dual-specificity RNA methyltransferase RlmN (375 aa).

Glu-98 acts as the Proton acceptor in catalysis. Residues 106–346 form the Radical SAM core domain; sequence GGKRRTLCVS…VRTTRGDDID (241 aa). Cysteines 113 and 349 form a disulfide. The [4Fe-4S] cluster site is built by Cys-120, Cys-124, and Cys-127. Residues 174–175, Ser-206, 228–230, and Asn-306 contribute to the S-adenosyl-L-methionine site; these read GE and SLH. The active-site S-methylcysteine intermediate is Cys-349.

This sequence belongs to the radical SAM superfamily. RlmN family. [4Fe-4S] cluster is required as a cofactor.

It localises to the cytoplasm. The enzyme catalyses adenosine(2503) in 23S rRNA + 2 reduced [2Fe-2S]-[ferredoxin] + 2 S-adenosyl-L-methionine = 2-methyladenosine(2503) in 23S rRNA + 5'-deoxyadenosine + L-methionine + 2 oxidized [2Fe-2S]-[ferredoxin] + S-adenosyl-L-homocysteine. The catalysed reaction is adenosine(37) in tRNA + 2 reduced [2Fe-2S]-[ferredoxin] + 2 S-adenosyl-L-methionine = 2-methyladenosine(37) in tRNA + 5'-deoxyadenosine + L-methionine + 2 oxidized [2Fe-2S]-[ferredoxin] + S-adenosyl-L-homocysteine. Specifically methylates position 2 of adenine 2503 in 23S rRNA and position 2 of adenine 37 in tRNAs. m2A2503 modification seems to play a crucial role in the proofreading step occurring at the peptidyl transferase center and thus would serve to optimize ribosomal fidelity. The sequence is that of Dual-specificity RNA methyltransferase RlmN from Chromohalobacter salexigens (strain ATCC BAA-138 / DSM 3043 / CIP 106854 / NCIMB 13768 / 1H11).